Reading from the N-terminus, the 519-residue chain is ATP synthase subunit alpha (519 aa).

174–181 (GDRQTGKT) contributes to the ATP binding site.

Belongs to the ATPase alpha/beta chains family. In terms of assembly, F-type ATPases have 2 components, CF(1) - the catalytic core - and CF(0) - the membrane proton channel. CF(1) has five subunits: alpha(3), beta(3), gamma(1), delta(1), epsilon(1). CF(0) has three main subunits: a(1), b(2) and c(9-12). The alpha and beta chains form an alternating ring which encloses part of the gamma chain. CF(1) is attached to CF(0) by a central stalk formed by the gamma and epsilon chains, while a peripheral stalk is formed by the delta and b chains.

The protein resides in the cell inner membrane. It carries out the reaction ATP + H2O + 4 H(+)(in) = ADP + phosphate + 5 H(+)(out). In terms of biological role, produces ATP from ADP in the presence of a proton gradient across the membrane. The alpha chain is a regulatory subunit. The protein is ATP synthase subunit alpha of Paracidovorax citrulli (strain AAC00-1) (Acidovorax citrulli).